The chain runs to 330 residues: Fructose-1,6-bisphosphatase class 1 (330 aa).

Residues Glu84, Asp103, Leu105, and Asp106 each coordinate Mg(2+). Residues Asp106–Ser109, Asn196, and Lys262 contribute to the substrate site. Glu268 is a Mg(2+) binding site.

This sequence belongs to the FBPase class 1 family. In terms of assembly, homotetramer. The cofactor is Mg(2+).

It is found in the cytoplasm. It carries out the reaction beta-D-fructose 1,6-bisphosphate + H2O = beta-D-fructose 6-phosphate + phosphate. Its pathway is carbohydrate biosynthesis; gluconeogenesis. The polypeptide is Fructose-1,6-bisphosphatase class 1 (Shewanella frigidimarina (strain NCIMB 400)).